Here is a 76-residue protein sequence, read N- to C-terminus: cAMP-dependent protein kinase inhibitor alpha (76 aa).

An N-acetylthreonine modification is found at T2. The disordered stretch occupies residues K49–S76.

This sequence belongs to the PKI family.

Functionally, extremely potent competitive inhibitor of cAMP-dependent protein kinase activity, this protein interacts with the catalytic subunit of the enzyme after the cAMP-induced dissociation of its regulatory chains. In Homo sapiens (Human), this protein is cAMP-dependent protein kinase inhibitor alpha (PKIA).